The sequence spans 330 residues: MKKSFILQQQEISFAKNTFTEKLIEHLGIIEVQGPILSQVGNGIQDNLSGTEKAVQVNVKQITDAKFEVVHSLAKWKRHTLARFNFAENEGLFVHMKALRPDEDSLDQTHSVYVDQWDWEKVIPTGRRNLAYLKETVRSIYQAILETEDAVHQKFGLSKFLPREITFIHSEELVQRYPELNDKQRENAICKEYGAVFLMGIGGVLSDGKPHDKRAPDYDDWTTPSEGEYLGLNGDILVWNPVLERAFEVSSMGIRVDETALRKQLALTGDEDRLQFDWHQDLVNGRLPLSIGGGIGQSRLAMLLLQKKHIGEVQSSVWPKVVTEQFENIL.

Belongs to the class-II aminoacyl-tRNA synthetase family. AsnA subfamily.

It localises to the cytoplasm. It carries out the reaction L-aspartate + NH4(+) + ATP = L-asparagine + AMP + diphosphate + H(+). It functions in the pathway amino-acid biosynthesis; L-asparagine biosynthesis; L-asparagine from L-aspartate (ammonia route): step 1/1. This is Aspartate--ammonia ligase from Histophilus somni (strain 2336) (Haemophilus somnus).